A 208-amino-acid polypeptide reads, in one-letter code: MQFSVGNIYQPSECHTCMDDQTFISTIKTGDKKKIEEMADDLWNYRDLYQRNALMISAMYGRTDLIEFFAARYDHIDDRDIEGNTALMWAVRNNRMESAKSLIALKCSIDIPDSAGNTPICWAVIFGYTDMVKLLISSGANINISNDEGDTPAILASKYGRSECLKMLIEAGCDLNAKNHNAQNVWKAAEAFGRKEILEVLASLSNGR.

ANK repeat units follow at residues 49–78, 82–111, 115–144, and 148–177; these read YQRNALMISAMYGRTDLIEFFAARYDHIDD, EGNTALMWAVRNNRMESAKSLIALKCSIDI, AGNTPICWAVIFGYTDMVKLLISSGANINI, and EGDTPAILASKYGRSECLKMLIEAGCDLNA.

In Thermoplasma acidophilum (strain ATCC 25905 / DSM 1728 / JCM 9062 / NBRC 15155 / AMRC-C165), this protein is Putative ankyrin repeat protein Ta0196.